A 186-amino-acid polypeptide reads, in one-letter code: Peptidyl-tRNA hydrolase (186 aa).

Y14 contacts tRNA. The active-site Proton acceptor is H19. Residues Y60 and N62 each coordinate tRNA.

Belongs to the PTH family. In terms of assembly, monomer.

The protein resides in the cytoplasm. The enzyme catalyses an N-acyl-L-alpha-aminoacyl-tRNA + H2O = an N-acyl-L-amino acid + a tRNA + H(+). Hydrolyzes ribosome-free peptidyl-tRNAs (with 1 or more amino acids incorporated), which drop off the ribosome during protein synthesis, or as a result of ribosome stalling. Functionally, catalyzes the release of premature peptidyl moieties from peptidyl-tRNA molecules trapped in stalled 50S ribosomal subunits, and thus maintains levels of free tRNAs and 50S ribosomes. The protein is Peptidyl-tRNA hydrolase of Mycoplasmopsis pulmonis (strain UAB CTIP) (Mycoplasma pulmonis).